The chain runs to 505 residues: Flagellin (505 aa).

The protein belongs to the bacterial flagellin family.

It is found in the secreted. The protein resides in the bacterial flagellum. In terms of biological role, flagellin is the subunit protein which polymerizes to form the filaments of bacterial flagella. The polypeptide is Flagellin (fliC) (Salmonella montevideo).